Reading from the N-terminus, the 328-residue chain is Twinfilin (328 aa).

In terms of domain architecture, ADF-H 1 spans 1-137; it reads MSASVELKPT…DYQQIMKSLS (137 aa). Ser143 is subject to Phosphoserine. Positions 173–304 constitute an ADF-H 2 domain; it reads GVAMSIDDKA…TEKEILHAAG (132 aa). The tract at residues 302–328 is disordered; that stretch reads AAGISSPQAETSTTKTGFSRPRPPRRR. The span at 306–318 shows a compositional bias: polar residues; the sequence is SSPQAETSTTKTG.

The protein belongs to the actin-binding proteins ADF family. Twinfilin subfamily. As to quaternary structure, interacts with G-actin; ADP-actin form.

It localises to the cytoplasm. It is found in the cytoskeleton. Functionally, actin-binding protein involved in motile and morphological processes. Inhibits actin polymerization, likely by sequestering G-actin. Prevents actin filament assembly by forming a 1:1 complex with actin monomers, and inhibits the nucleotide exchange reaction of actin monomers. This is Twinfilin (twf1) from Schizosaccharomyces pombe (strain 972 / ATCC 24843) (Fission yeast).